A 368-amino-acid polypeptide reads, in one-letter code: 2-aminoethylphosphonate--pyruvate transaminase (368 aa).

Lysine 192 carries the N6-(pyridoxal phosphate)lysine modification.

The protein belongs to the class-V pyridoxal-phosphate-dependent aminotransferase family. PhnW subfamily. As to quaternary structure, homodimer. Pyridoxal 5'-phosphate is required as a cofactor.

It catalyses the reaction (2-aminoethyl)phosphonate + pyruvate = phosphonoacetaldehyde + L-alanine. Its function is as follows. Involved in phosphonate degradation. The sequence is that of 2-aminoethylphosphonate--pyruvate transaminase from Pseudomonas putida (strain W619).